The chain runs to 270 residues: Glucosamine-6-phosphate deaminase (270 aa).

Aspartate 72 acts as the Proton acceptor; for enolization step in catalysis. The active-site For ring-opening step is the aspartate 141. Histidine 143 (proton acceptor; for ring-opening step) is an active-site residue. The For ring-opening step role is filled by glutamate 148.

The protein belongs to the glucosamine/galactosamine-6-phosphate isomerase family. NagB subfamily. Homohexamer.

It carries out the reaction alpha-D-glucosamine 6-phosphate + H2O = beta-D-fructose 6-phosphate + NH4(+). It participates in amino-sugar metabolism; N-acetylneuraminate degradation; D-fructose 6-phosphate from N-acetylneuraminate: step 5/5. With respect to regulation, allosterically activated by N-acetylglucosamine 6-phosphate (GlcNAc6P). Functionally, catalyzes the reversible isomerization-deamination of glucosamine 6-phosphate (GlcN6P) to form fructose 6-phosphate (Fru6P) and ammonium ion. The protein is Glucosamine-6-phosphate deaminase of Haemophilus influenzae (strain 86-028NP).